Reading from the N-terminus, the 515-residue chain is 1-pyrroline-5-carboxylate dehydrogenase (515 aa).

Catalysis depends on residues Glu-286 and Cys-320.

The protein belongs to the aldehyde dehydrogenase family. RocA subfamily.

It carries out the reaction L-glutamate 5-semialdehyde + NAD(+) + H2O = L-glutamate + NADH + 2 H(+). It participates in amino-acid degradation; L-proline degradation into L-glutamate; L-glutamate from L-proline: step 2/2. The sequence is that of 1-pyrroline-5-carboxylate dehydrogenase from Bacillus anthracis (strain A0248).